Consider the following 198-residue polypeptide: Syndecan-4 (198 aa).

The signal sequence occupies residues 1–18; the sequence is MAPARLFALLLFFVGGVA. The Extracellular segment spans residues 19 to 145; sequence ESIRETEVID…QGSNIFERTE (127 aa). O-linked (Xyl...) (glycosaminoglycan) serine glycans are attached at residues Ser39, Ser61, and Ser63. O-linked (Xyl...) (chondroitin sulfate) serine glycosylation occurs at Ser95. A helical transmembrane segment spans residues 146-170; sequence VLAALIVGGIVGILFAVFLILLLMY. At 171–198 the chain is on the cytoplasmic side; it reads RMKKKDEGSYDLGKKPIYKKAPTNEFYA.

It belongs to the syndecan proteoglycan family. In terms of assembly, homodimer. Interacts (via its cytoplasmic domain) with GIPC (via its PDZ domain). Interacts (via its cytoplasmic domain) with NUDT16L1. Interacts with CDCP1 and SDCBP. Interacts with DNM2; this interaction is markedly enhanced at focal ahesion site upon induction of focal adhesions and stress-fiber formation. Post-translationally, shedding is enhanced by a number of factors such as heparanase, thrombin or EGF. Also by stress and wound healing. PMA-mediated shedding is inhibited by TIMP3. O-glycosylated; contains both chondroitin sulfate and heparan sulfate. Ser-39, Ser-61 and Ser-63 can all be modified by either chondroitin sulfate or heparan sulfate, and the protein exists in forms that contain only chondroitin sulfate, only heparan sulfate and both chondroitin sulfate and heparan sulfate. In terms of tissue distribution, detected in fibroblasts (at protein level). Also expressed in epithelial cells.

It localises to the membrane. Its subcellular location is the secreted. Functionally, cell surface proteoglycan which regulates exosome biogenesis in concert with SDCBP and PDCD6IP. This Homo sapiens (Human) protein is Syndecan-4.